The chain runs to 44 residues: Photosystem I reaction center subunit IX 2 (44 aa).

Residues 13-35 (APVLATLWLSSTAVILIGVNSYF) form a helical membrane-spanning segment.

This sequence belongs to the PsaJ family.

It localises to the cellular thylakoid membrane. Functionally, may help in the organization of the PsaE and PsaF subunits. The sequence is that of Photosystem I reaction center subunit IX 2 (psaJ2) from Prochlorococcus marinus (strain NATL2A).